The sequence spans 321 residues: ATP-dependent 6-phosphofructokinase (321 aa).

Glycine 12 lines the ATP pocket. ADP-binding positions include 22–26 (RGVVR) and 55–60 (RYSVSD). Residues 73-74 (RF) and 103-106 (GDGS) each bind ATP. Aspartate 104 lines the Mg(2+) pocket. 127-129 (TID) contacts substrate. Catalysis depends on aspartate 129, which acts as the Proton acceptor. An ADP-binding site is contributed by arginine 156. Substrate is bound by residues arginine 164 and 171–173 (MGR). ADP contacts are provided by residues 187–189 (GCE) and 215–217 (KRH). Residues glutamate 224, arginine 245, and 251–254 (HVQR) contribute to the substrate site.

Belongs to the phosphofructokinase type A (PFKA) family. ATP-dependent PFK group I subfamily. Prokaryotic clade 'B1' sub-subfamily. Homotetramer. Mg(2+) is required as a cofactor.

Its subcellular location is the cytoplasm. The catalysed reaction is beta-D-fructose 6-phosphate + ATP = beta-D-fructose 1,6-bisphosphate + ADP + H(+). The protein operates within carbohydrate degradation; glycolysis; D-glyceraldehyde 3-phosphate and glycerone phosphate from D-glucose: step 3/4. Allosterically activated by ADP and other diphosphonucleosides, and allosterically inhibited by phosphoenolpyruvate. Catalyzes the phosphorylation of D-fructose 6-phosphate to fructose 1,6-bisphosphate by ATP, the first committing step of glycolysis. This Mannheimia succiniciproducens (strain KCTC 0769BP / MBEL55E) protein is ATP-dependent 6-phosphofructokinase.